We begin with the raw amino-acid sequence, 670 residues long: DNA ligase (670 aa).

NAD(+) is bound by residues 33 to 37, 82 to 83, and E114; these read DAEYD and SL. The N6-AMP-lysine intermediate role is filled by K116. The NAD(+) site is built by R137, E174, K291, and K315. Zn(2+) contacts are provided by C409, C412, C427, and C433. The BRCT domain maps to 593–670; the sequence is GVELPLEGKT…TEQDLLNLMK (78 aa).

The protein belongs to the NAD-dependent DNA ligase family. LigA subfamily. Mg(2+) is required as a cofactor. The cofactor is Mn(2+).

The enzyme catalyses NAD(+) + (deoxyribonucleotide)n-3'-hydroxyl + 5'-phospho-(deoxyribonucleotide)m = (deoxyribonucleotide)n+m + AMP + beta-nicotinamide D-nucleotide.. DNA ligase that catalyzes the formation of phosphodiester linkages between 5'-phosphoryl and 3'-hydroxyl groups in double-stranded DNA using NAD as a coenzyme and as the energy source for the reaction. It is essential for DNA replication and repair of damaged DNA. In Vibrio campbellii (strain ATCC BAA-1116), this protein is DNA ligase.